Here is a 264-residue protein sequence, read N- to C-terminus: Acyl-[acyl-carrier-protein]--UDP-N-acetylglucosamine O-acyltransferase (264 aa).

The protein belongs to the transferase hexapeptide repeat family. LpxA subfamily. As to quaternary structure, homotrimer.

Its subcellular location is the cytoplasm. It carries out the reaction a (3R)-hydroxyacyl-[ACP] + UDP-N-acetyl-alpha-D-glucosamine = a UDP-3-O-[(3R)-3-hydroxyacyl]-N-acetyl-alpha-D-glucosamine + holo-[ACP]. The protein operates within glycolipid biosynthesis; lipid IV(A) biosynthesis; lipid IV(A) from (3R)-3-hydroxytetradecanoyl-[acyl-carrier-protein] and UDP-N-acetyl-alpha-D-glucosamine: step 1/6. Functionally, involved in the biosynthesis of lipid A, a phosphorylated glycolipid that anchors the lipopolysaccharide to the outer membrane of the cell. The chain is Acyl-[acyl-carrier-protein]--UDP-N-acetylglucosamine O-acyltransferase from Haemophilus ducreyi (strain 35000HP / ATCC 700724).